A 256-amino-acid polypeptide reads, in one-letter code: MTSQGRGTRRGGTRGNVRAFPEGPTDAGLTPRQRRVLEVIRAAVERRGYPPSVREIGEAVGLTSTSSVAHQLKVLEEKGYLRRDPNRPRAMEVLTVEHPRQRADVGAGATTVAGTIPIVGEAAPGTTEGSKSDAAYVPVLGRIAAGGPILAEQAVEDVFPLPREIVGEGTLFLLRVVGDSMINAAICDGDWVVVRQQPVADNGEIVAAMIDGEATVKRLRVRDGKIWLHPENSAFADIPGEDATILGRIVAVLRRV.

The segment at 1 to 31 (MTSQGRGTRRGGTRGNVRAFPEGPTDAGLTP) is disordered. A DNA-binding region (H-T-H motif) is located at residues 53–73 (VREIGEAVGLTSTSSVAHQLK). Active-site for autocatalytic cleavage activity residues include Ser180 and Lys217.

The protein belongs to the peptidase S24 family. As to quaternary structure, homodimer.

The enzyme catalyses Hydrolysis of Ala-|-Gly bond in repressor LexA.. Represses a number of genes involved in the response to DNA damage (SOS response), including recA and lexA. In the presence of single-stranded DNA, RecA interacts with LexA causing an autocatalytic cleavage which disrupts the DNA-binding part of LexA, leading to derepression of the SOS regulon and eventually DNA repair. This chain is LexA repressor, found in Frankia casuarinae (strain DSM 45818 / CECT 9043 / HFP020203 / CcI3).